The sequence spans 97 residues: Kunitz-type trypsin inhibitor 1 (97 aa).

This sequence belongs to the protease inhibitor I3 (leguminous Kunitz-type inhibitor) family.

Functionally, exhibits Kunitz trypsin protease inhibitor activity. This is Kunitz-type trypsin inhibitor 1 from Selenicereus costaricensis (Red-fleshed dragon fruit).